We begin with the raw amino-acid sequence, 437 residues long: MRVLHVAPEAYPLAKVGGLADVVGALPKALRPLGVEAHVLLPWHGGLEARRVGEVAFAFFGREERAPLGERVEGGVRFLLLGVEGFGRERVYGYPDDAERYLRFALAAKEVARGYDLVHAHDWTAALLALYAPTVYTIHNLAHQGLVDPGLFFSWTGLPWSLFHMEALEFYGRVNLMKGGIVFARRVTTVSPSYAEEIQTPEFGMGLDGVLRRHAGKLRGILNGLDTEVFDPGKDPYLPAPYTREDPSGKARAKEAFRERTGLRPPVLAYVGRLDYQKGLDLVLKALPRLLEMGFRLYVQGVGDGGLQEAFLRAEEENPEGVRFLPAYDEAMARLAYAGAEAVLVPSRFEPCGLVQMIASRYGTPPVARAVGGLKDTVEDGRGGVLFETYHPEGLLYGVLRLFRLGAEEMGLRAMEKDFSWEGPARAYREVYREALG.

Position 15 (K15) interacts with ADP-alpha-D-glucose.

Belongs to the glycosyltransferase 1 family. Bacterial/plant glycogen synthase subfamily.

It carries out the reaction [(1-&gt;4)-alpha-D-glucosyl](n) + ADP-alpha-D-glucose = [(1-&gt;4)-alpha-D-glucosyl](n+1) + ADP + H(+). It participates in glycan biosynthesis; glycogen biosynthesis. Its function is as follows. Synthesizes alpha-1,4-glucan chains using ADP-glucose. The chain is Glycogen synthase from Thermus thermophilus (strain ATCC 27634 / DSM 579 / HB8).